The chain runs to 631 residues: Methanol dehydrogenase [cytochrome c] subunit 1 (631 aa).

Positions 1-32 (MNRNTPKARGASSLAMAVAMGLAVLTTAPATA) are cleaved as a signal peptide. A disulfide bridge connects residues C135 and C136. Positions 209 and 293 each coordinate Ca(2+). The active-site Proton acceptor is the D335. The cysteines at positions 418 and 447 are disulfide-linked.

Belongs to the bacterial PQQ dehydrogenase family. In terms of assembly, heterotetramer composed of 2 alpha and 2 beta subunits. The cofactor is pyrroloquinoline quinone. Ca(2+) is required as a cofactor.

The protein resides in the periplasm. It catalyses the reaction 2 Fe(III)-[cytochrome cL] + a primary alcohol = 2 Fe(II)-[cytochrome cL] + an aldehyde + 2 H(+). Functionally, catalyzes the oxidation of primary alcohols including methanol. This Paracoccus denitrificans protein is Methanol dehydrogenase [cytochrome c] subunit 1 (moxF).